The primary structure comprises 1509 residues: Myosin-2 heavy chain, non muscle (1509 aa).

Positions 32–85 (SDKTLAWWPTKDADRAFCHVEVTKDDGKNFTVRLENGEEKSQPKNEKNFLGVNP) constitute a Myosin N-terminal SH3-like domain. The region spanning 89–787 (DGVEDMGELG…QLAAIEELRE (699 aa)) is the Myosin motor domain. Position 133 is an N6,N6,N6-trimethyllysine (Lys-133). Residue 182–189 (GESGAGKT) coordinates ATP. Residues 623–643 (APAEEEKAAAGGSRNRSTGRG) form a disordered region. 2 actin-binding regions span residues 660–682 (LAHL…IPNL) and 766–780 (RFGV…GQLA). The region spanning 790-819 (ISKMVVSIQAGARAFLARRMYDKMREQTVS) is the IQ domain. The alpha-helical tailpiece (S2) stretch occupies residues 848-1226 (LISQRNFQKE…AERDSGAQQR (379 aa)). Residues 848–1509 (LISQRNFQKE…VRAGSARAEE (662 aa)) are a coiled coil. Basic and acidic residues-rich tracts occupy residues 958 to 1019 (ELKA…KDAL), 1034 to 1047 (KNTE…RNEL), 1097 to 1107 (EDARSEVDSLK), 1115 to 1141 (KSLK…RANV), and 1179 to 1189 (QVDETKRRLEE). 6 disordered regions span residues 958-1049 (ELKA…ELDD), 1068-1141 (LAQT…RANV), 1170-1195 (AAQA…ASAA), 1213-1259 (ADLD…RLEG), 1352-1425 (VAKE…NREL), and 1474-1509 (QLQD…RAEE). Residues 1227–1252 (RKLNTRISELQSELENAPKTGGASSE) are hinge. Positions 1231–1240 (TRISELQSEL) are enriched in polar residues. The tract at residues 1253–1482 (EVKRLEGELE…AQLQDEIDGT (230 aa)) is alpha-helical tailpiece (LMM). A light meromyosin (LMM) region spans residues 1253–1509 (EVKRLEGELE…VRAGSARAEE (257 aa)). Positions 1483–1509 (PSSRGGSTRGASARGASVRAGSARAEE) are nonhelical tailpiece. Over residues 1484–1509 (SSRGGSTRGASARGASVRAGSARAEE) the composition is skewed to low complexity. Phosphoserine occurs at positions 1489, 1494, and 1499.

It belongs to the TRAFAC class myosin-kinesin ATPase superfamily. Myosin family. As to quaternary structure, myosin II heavy chain is two-headed. It self-assembles into filaments. Hexamer of 2 heavy chain subunits (MHC), 2 alkali light chain subunits (MLC) and 2 regulatory light chain subunits (MLC-2).

Myosin is a protein that binds to F-actin and has ATPase activity that is activated by F-actin. This Acanthamoeba castellanii (Amoeba) protein is Myosin-2 heavy chain, non muscle.